A 582-amino-acid chain; its full sequence is Protein alan shepard (582 aa).

The span at 1–12 (MHPRYSPAPPPQ) shows a compositional bias: pro residues. The disordered stretch occupies residues 1–73 (MHPRYSPAPP…AAPPTSRSAF (73 aa)). At Y5 the chain carries Phosphotyrosine. Residues 13-24 (QQQQMGGPPHQQ) are compositionally biased toward low complexity. A compositionally biased stretch (gly residues) spans 25–35 (QGGGGGGGGSM). Residues 37-57 (GPSNAQQLPPQIPRSQNYSNG) show a composition bias toward polar residues. The span at 58 to 72 (SSSSAAAAPPTSRSA) shows a compositional bias: low complexity. 2 positions are modified to phosphotyrosine: Y125 and Y142. Residues 164-225 (PATTTYGQRV…TVQNQNQQGG (62 aa)) are disordered. Over residues 178–225 (SPSNTNSSSSSNTGSQSGTLSTSLSNTTNTNTNMGPNGTVQNQNQQGG) the composition is skewed to low complexity. RRM domains are found at residues 231 to 304 (TNLY…MAKQ) and 310 to 389 (TNLY…FADG). The segment at 555–582 (PMTDSEQASTAASPDEAYTQYPHQAAPK) is disordered.

Functionally, has a role in the perception of gravity. The protein is Protein alan shepard of Drosophila erecta (Fruit fly).